Here is a 457-residue protein sequence, read N- to C-terminus: Multidrug resistance protein MdtK (457 aa).

12 consecutive transmembrane segments (helical) span residues 11 to 31 (LLALAIPVILAQIAQTAMGFV), 53 to 73 (IWLPAILFGHGLLLALTPVIA), 93 to 113 (WLAGFVSVLIMLVLWNAGYII), 127 to 147 (AVGYLRALLWGAPGYLFFQVA), 160 to 180 (GMVMGFIGLLVNIPVNYIFIY), 189 to 209 (GGVGCGVATAAVYWVMFLAMV), 243 to 263 (LPIALALFFEVTLFAVVALLV), 276 to 296 (IALNFSSLMFVLPMSLAAAVT), 314 to 334 (AARTGLMVGVCMATLTAIFTV), 350 to 370 (VVTLAAHLMLLAAVYQISDSI), 387 to 407 (IFYITFTAYWVLGLPSGYILA), and 418 to 438 (PAGFWIGFIIGLTSAAIMMML).

Belongs to the multi antimicrobial extrusion (MATE) (TC 2.A.66.1) family. MdtK subfamily.

The protein resides in the cell inner membrane. In terms of biological role, multidrug efflux pump that functions probably as a Na(+)/drug antiporter. The sequence is that of Multidrug resistance protein MdtK from Escherichia coli O9:H4 (strain HS).